We begin with the raw amino-acid sequence, 437 residues long: Protein farnesyltransferase subunit beta (437 aa).

5 PFTB repeats span residues 123–164 (ATDV…CIIG), 174–215 (REKL…SLTN), 222–263 (FEGT…VILK), 270–312 (LKSL…PLLH), and 332–374 (QQAL…SIAQ). (2E,6E)-farnesyl diphosphate-binding positions include 248–251 (HGGY) and 291–294 (RCNK). Asp297 and Cys299 together coordinate Zn(2+). Residue 300–303 (YSFW) coordinates (2E,6E)-farnesyl diphosphate. A Zn(2+)-binding site is contributed by His362. Thr436 is subject to Phosphothreonine.

Belongs to the protein prenyltransferase subunit beta family. As to quaternary structure, heterodimer of FNTA and FNTB. It depends on Zn(2+) as a cofactor.

The catalysed reaction is L-cysteinyl-[protein] + (2E,6E)-farnesyl diphosphate = S-(2E,6E)-farnesyl-L-cysteinyl-[protein] + diphosphate. Its function is as follows. Essential subunit of the farnesyltransferase complex. Catalyzes the transfer of a farnesyl moiety from farnesyl diphosphate to a cysteine at the fourth position from the C-terminus of several proteins having the C-terminal sequence Cys-aliphatic-aliphatic-X. In Bos taurus (Bovine), this protein is Protein farnesyltransferase subunit beta (FNTB).